The following is a 74-amino-acid chain: High-potential iron-sulfur protein isozyme 2 (74 aa).

[4Fe-4S] cluster-binding residues include Cys-36, Cys-39, Cys-53, and Cys-67.

In terms of assembly, homodimer.

Its function is as follows. Specific class of high-redox-potential 4Fe-4S ferredoxins. Functions in anaerobic electron transport in most purple and in some other photosynthetic bacteria and in at least one genus (Paracoccus) of halophilic, denitrifying bacteria. This chain is High-potential iron-sulfur protein isozyme 2, found in Ectothiorhodospira mobilis.